We begin with the raw amino-acid sequence, 59 residues long: uncharacterized protein (59 aa).

This is an uncharacterized protein from Acheta domesticus (House cricket).